The sequence spans 447 residues: Methionine aminopeptidase 2 (447 aa).

The disordered stretch occupies residues 1–86 (MAGATEGEDT…KNKKKKKKKI (86 aa)). Residues 8–32 (EDTKVIESKINELNIDKPKLEDNNE) are compositionally biased toward basic and acidic residues. The span at 43-60 (GGDDDDDKEDDDDNDEIT) shows a compositional bias: acidic residues. A compositionally biased stretch (basic residues) spans 71–86 (KKKKKNKNKKKKKKKI). His198 provides a ligand contact to substrate. Residues Asp218, Asp229, and His300 each contribute to the a divalent metal cation site. A substrate-binding site is contributed by His308. Residues Glu333 and Glu428 each contribute to the a divalent metal cation site.

This sequence belongs to the peptidase M24A family. Methionine aminopeptidase eukaryotic type 2 subfamily. Co(2+) serves as cofactor. Requires Zn(2+) as cofactor. It depends on Mn(2+) as a cofactor. Fe(2+) is required as a cofactor.

Its subcellular location is the cytoplasm. It catalyses the reaction Release of N-terminal amino acids, preferentially methionine, from peptides and arylamides.. Cotranslationally removes the N-terminal methionine from nascent proteins. The N-terminal methionine is often cleaved when the second residue in the primary sequence is small and uncharged (Met-Ala-, Cys, Gly, Pro, Ser, Thr, or Val). The sequence is that of Methionine aminopeptidase 2 from Candida albicans (strain WO-1) (Yeast).